The primary structure comprises 269 residues: Formamidopyrimidine-DNA glycosylase (269 aa).

The active-site Schiff-base intermediate with DNA is the Pro2. Residue Glu3 is the Proton donor of the active site. Catalysis depends on Lys57, which acts as the Proton donor; for beta-elimination activity. DNA is bound by residues His90, Arg109, and Lys150. Residues 235 to 269 (QVYGRKGEPCRVCGTPIVATKHAQRATFYCRHCQK) form an FPG-type zinc finger. The active-site Proton donor; for delta-elimination activity is the Arg259.

This sequence belongs to the FPG family. Monomer. The cofactor is Zn(2+).

The catalysed reaction is Hydrolysis of DNA containing ring-opened 7-methylguanine residues, releasing 2,6-diamino-4-hydroxy-5-(N-methyl)formamidopyrimidine.. It carries out the reaction 2'-deoxyribonucleotide-(2'-deoxyribose 5'-phosphate)-2'-deoxyribonucleotide-DNA = a 3'-end 2'-deoxyribonucleotide-(2,3-dehydro-2,3-deoxyribose 5'-phosphate)-DNA + a 5'-end 5'-phospho-2'-deoxyribonucleoside-DNA + H(+). In terms of biological role, involved in base excision repair of DNA damaged by oxidation or by mutagenic agents. Acts as a DNA glycosylase that recognizes and removes damaged bases. Has a preference for oxidized purines, such as 7,8-dihydro-8-oxoguanine (8-oxoG). Has AP (apurinic/apyrimidinic) lyase activity and introduces nicks in the DNA strand. Cleaves the DNA backbone by beta-delta elimination to generate a single-strand break at the site of the removed base with both 3'- and 5'-phosphates. This Salmonella heidelberg (strain SL476) protein is Formamidopyrimidine-DNA glycosylase.